The primary structure comprises 95 residues: Co-chaperonin GroES (95 aa).

This sequence belongs to the GroES chaperonin family. Heptamer of 7 subunits arranged in a ring. Interacts with the chaperonin GroEL.

The protein localises to the cytoplasm. Together with the chaperonin GroEL, plays an essential role in assisting protein folding. The GroEL-GroES system forms a nano-cage that allows encapsulation of the non-native substrate proteins and provides a physical environment optimized to promote and accelerate protein folding. GroES binds to the apical surface of the GroEL ring, thereby capping the opening of the GroEL channel. The chain is Co-chaperonin GroES from Desulfotalea psychrophila (strain LSv54 / DSM 12343).